The chain runs to 340 residues: Ketol-acid reductoisomerase (NADP(+)) (340 aa).

The region spanning 2-182 (AELYYDNQAD…GCTRAGVLRT (181 aa)) is the KARI N-terminal Rossmann domain. Residues 25 to 28 (FGSQ), S51, S53, and 83 to 86 (DIGQ) each bind NADP(+). The active site involves H108. G134 contacts NADP(+). In terms of domain architecture, KARI C-terminal knotted spans 183–328 (TFAEETETDL…RELRRMMPFV (146 aa)). Residues D191, E195, E227, and E231 each coordinate Mg(2+). S252 is a substrate binding site.

This sequence belongs to the ketol-acid reductoisomerase family. Requires Mg(2+) as cofactor.

It catalyses the reaction (2R)-2,3-dihydroxy-3-methylbutanoate + NADP(+) = (2S)-2-acetolactate + NADPH + H(+). The catalysed reaction is (2R,3R)-2,3-dihydroxy-3-methylpentanoate + NADP(+) = (S)-2-ethyl-2-hydroxy-3-oxobutanoate + NADPH + H(+). The protein operates within amino-acid biosynthesis; L-isoleucine biosynthesis; L-isoleucine from 2-oxobutanoate: step 2/4. It participates in amino-acid biosynthesis; L-valine biosynthesis; L-valine from pyruvate: step 2/4. Its function is as follows. Involved in the biosynthesis of branched-chain amino acids (BCAA). Catalyzes an alkyl-migration followed by a ketol-acid reduction of (S)-2-acetolactate (S2AL) to yield (R)-2,3-dihydroxy-isovalerate. In the isomerase reaction, S2AL is rearranged via a Mg-dependent methyl migration to produce 3-hydroxy-3-methyl-2-ketobutyrate (HMKB). In the reductase reaction, this 2-ketoacid undergoes a metal-dependent reduction by NADPH to yield (R)-2,3-dihydroxy-isovalerate. This chain is Ketol-acid reductoisomerase (NADP(+)), found in Chloroflexus aurantiacus (strain ATCC 29366 / DSM 635 / J-10-fl).